A 323-amino-acid chain; its full sequence is Beta-ketoacyl-[acyl-carrier-protein] synthase III (323 aa).

Residues C113 and H250 contribute to the active site. The tract at residues 251–255 (QANRR) is ACP-binding. N280 is an active-site residue.

The protein belongs to the thiolase-like superfamily. FabH family. As to quaternary structure, homodimer.

It localises to the cytoplasm. It carries out the reaction malonyl-[ACP] + acetyl-CoA + H(+) = 3-oxobutanoyl-[ACP] + CO2 + CoA. It participates in lipid metabolism; fatty acid biosynthesis. Catalyzes the condensation reaction of fatty acid synthesis by the addition to an acyl acceptor of two carbons from malonyl-ACP. Catalyzes the first condensation reaction which initiates fatty acid synthesis and may therefore play a role in governing the total rate of fatty acid production. Possesses both acetoacetyl-ACP synthase and acetyl transacylase activities. Its substrate specificity determines the biosynthesis of branched-chain and/or straight-chain of fatty acids. This chain is Beta-ketoacyl-[acyl-carrier-protein] synthase III, found in Allorhizobium ampelinum (strain ATCC BAA-846 / DSM 112012 / S4) (Agrobacterium vitis (strain S4)).